The primary structure comprises 209 residues: Large ribosomal subunit protein uL3 (209 aa).

Belongs to the universal ribosomal protein uL3 family. As to quaternary structure, part of the 50S ribosomal subunit. Forms a cluster with proteins L14 and L19.

Functionally, one of the primary rRNA binding proteins, it binds directly near the 3'-end of the 23S rRNA, where it nucleates assembly of the 50S subunit. In Lactiplantibacillus plantarum (strain ATCC BAA-793 / NCIMB 8826 / WCFS1) (Lactobacillus plantarum), this protein is Large ribosomal subunit protein uL3.